A 348-amino-acid chain; its full sequence is Calcium/calmodulin-dependent protein kinase type 1 (348 aa).

Positions 7 to 22 (RDGSGPAPNATIREKY) match the Nuclear localization signal 1 motif. Residues 22–278 (YDFRDVLGTG…CQDALSHPWI (257 aa)) enclose the Protein kinase domain. ATP is bound by residues 28-36 (LGTGAFSKV) and Lys-52. The Nuclear localization signal 2 motif lies at 71–78 (KVLRKLRH). Asp-144 functions as the Proton acceptor in the catalytic mechanism. Phosphothreonine; by ckk-1 is present on Thr-179. The interval 278 to 318 (ISGNTAYTHDIHGTVAVHLKKSLAKRNWKKAYNAAAAIRQL) is autoinhibitory domain. The short motif at 288 to 294 (IHGTVAV) is the Nuclear export sequence element. The Nuclear localization signal 3 motif lies at 297-307 (KKSLAKRNWKK). Residues 298-319 (KSLAKRNWKKAYNAAAAIRQLQ) form a calmodulin-binding region. The span at 327-338 (SNRLQKQASQQQ) shows a compositional bias: polar residues. Positions 327-348 (SNRLQKQASQQQPEPPTPAFHA) are disordered. Over residues 339-348 (PEPPTPAFHA) the composition is skewed to pro residues.

This sequence belongs to the protein kinase superfamily. CAMK Ser/Thr protein kinase family. CaMK subfamily. In terms of assembly, interacts with importin ima-3; affinity for ima-3 is increased in the presence of Ca(2+) and calmodulin and leads to increased nuclear accumulation of cmk-1 in FLP neurons upon prolonged heat activation. The cofactor is Mg(2+). Phosphorylation at Thr-179 can promote both nuclear export and import, sustaining nucleocytoplasmic shuttling. Expressed in head and tail neurons and vulval muscles. Throughout the nervous system. Detected in neurites and neuronal cell bodies. Expressed in the mechanosensory neurons, AVM and ALM, and in the interneurons, AVA, AVB and AVD. Expressed in the right and left ASE neurons where it functions cell-autonomously to control salt-avoidance learning. Expressed in FLP and AFD thermosensory neurons.

The protein localises to the nucleus. The protein resides in the cytoplasm. The catalysed reaction is L-seryl-[protein] + ATP = O-phospho-L-seryl-[protein] + ADP + H(+). It catalyses the reaction L-threonyl-[protein] + ATP = O-phospho-L-threonyl-[protein] + ADP + H(+). Its activity is regulated as follows. Activated by Ca(2+)/calmodulin. Binding of calmodulin results in a conformational change that generates functional binding sites for both substrate and ATP, and thus relieves autoinhibition and lowers the Km of substrate binding. Must be phosphorylated by ckk-1 to be maximally active but this does not appear to be required for activity in AFD neurons. In terms of biological role, calcium/calmodulin-dependent protein kinase that operates in the calcium-triggered CaMKK-CaMK1 signaling cascade which results in transcriptional activation. Transcriptional activation occurs at least in part through phosphorylation of crh-1. Regulates gene expression, sensory morphology, and function of the AFD thermosensory neurons. Involved in long-term adaptation of AFD neurons to temperatures warmer than the initial acclimatized cultivation temperature. Acts in the FLP thermal nociceptors to moderate the responsiveness to noxious heat and controls neuropeptide release from FLP neurons in response to temperature elevations. Regulates the dauer decision, the decision of the larvae to enter into the alternative stress-resistant and long-lived dauer developmental stage, based on the feeding state, primarily in the AWC sensory neurons. Acts non cell-autonomously in the AWC neurons to regulate expression of the daf-28 insulin-like peptide and cell-autonomously in the ASI sensory neurons to regulate expression of the growth promoting daf-7 in a food-regulated manner. Plays a role in memory-based thermal response of an individual AFD neuron cell. Influences habituation and sensitivity to repeated mechanosensory stimuli. Involved in chemotaxis response in AWC neurons to attractant 2-heptanone, a volatile organic compound emitted by the nematode pathogenic bacterium B.nematocida B16. Acts in the ASE salt-sensing neurons to promote a type of aversive gustatory-associated learning called salt-avoidance learning via regulation of crh-1 signaling and the promotion of long-term memory formation, but is not involved in salt attraction. Represses transcription of glutamate receptor glr-1 in the nucleus basally and in response to changes in synaptic activity. The protein is Calcium/calmodulin-dependent protein kinase type 1 of Caenorhabditis elegans.